Reading from the N-terminus, the 148-residue chain is Large ribosomal subunit protein bL9 (148 aa).

It belongs to the bacterial ribosomal protein bL9 family.

In terms of biological role, binds to the 23S rRNA. The sequence is that of Large ribosomal subunit protein bL9 from Hahella chejuensis (strain KCTC 2396).